The chain runs to 683 residues: MDDYRYRDNYEGYAPNDGYYRGNEQNPEEDAQSDVTEGHDEEDEIYEGEYQGIPHPDDVKSKQTKMAPSRADGLRGQADLMAERMEDEEQLAHQYETIIDECGHGRFQWTLFFVLVLALMADGVEVFVVSFALPSAEKDMCLSSSKKGMLGLIVYLGMMAGAFILGGLADKLGRKKVLSMSLAINASFASLSSFVQGYGAFLFCRLISGIGIGGSLPIVFAYFSEFLSREKRGEHLSWLGIFWMTGGIYASAMAWSIIPHYGWGFSMGTNYHFHSWRVFVIVCALPATVSMVALKFMPESPRFLLEMGKHDEAWMILKQVHDTNMRAKGTPEKVFTVSHIKTPKQMDEFIEIQSSTGTWYQRWLVRFMTIFKQVWDNALYCVMGPYRMNTLILAVVWFTMALSYYGLTVWFPDMIRYFQDEEYKSKMKVFFGEHVHGATINFTMENQIHQHGKLVNDKFIKMYFKHVLFEDTFFDKCYFEDVTSTDTYFKNCTIESTTFYNTDLYKHKFIDCRFINSTFLEQKEGCHMDFEEDNDFLIYLVSFLGSLSVLPGNIISALLMDRIGRLKMIGGSMLISAVCCFFLFFGNSESAMIGWQCLFCGTSIAAWNALDVITVELYPTNQRATAFGILNGLCKLGAILGNTIFASFVGITKVVPILLAAASLVGGGLVALRLPETREQVLM.

Over residues 1–10 the composition is skewed to basic and acidic residues; it reads MDDYRYRDNY. Residues 1–72 form a disordered region; sequence MDDYRYRDNY…QTKMAPSRAD (72 aa). The Cytoplasmic portion of the chain corresponds to 1–110; the sequence is MDDYRYRDNY…ECGHGRFQWT (110 aa). The residue at position 33 (S33) is a Phosphoserine. T36 is modified (phosphothreonine). The helical transmembrane segment at 111–131 threads the bilayer; it reads LFFVLVLALMADGVEVFVVSF. Residues 132–148 are Extracellular-facing; that stretch reads ALPSAEKDMCLSSSKKG. A helical transmembrane segment spans residues 149–169; sequence MLGLIVYLGMMAGAFILGGLA. Residues 170–182 are Cytoplasmic-facing; it reads DKLGRKKVLSMSL. Residues 183–203 form a helical membrane-spanning segment; sequence AINASFASLSSFVQGYGAFLF. The Extracellular segment spans residues 204 to 205; the sequence is CR. The helical transmembrane segment at 206-226 threads the bilayer; the sequence is LISGIGIGGSLPIVFAYFSEF. Residues 227-237 lie on the Cytoplasmic side of the membrane; it reads LSREKRGEHLS. Residues 238-258 traverse the membrane as a helical segment; sequence WLGIFWMTGGIYASAMAWSII. Residues 259 to 277 lie on the Extracellular side of the membrane; that stretch reads PHYGWGFSMGTNYHFHSWR. The helical transmembrane segment at 278–298 threads the bilayer; it reads VFVIVCALPATVSMVALKFMP. Over 299–390 the chain is Cytoplasmic; that stretch reads ESPRFLLEMG…CVMGPYRMNT (92 aa). Residues 391 to 411 traverse the membrane as a helical segment; it reads LILAVVWFTMALSYYGLTVWF. The Extracellular segment spans residues 412–535; sequence PDMIRYFQDE…CHMDFEEDND (124 aa). Y423 is subject to Phosphotyrosine. N-linked (GlcNAc...) asparagine glycosylation is found at N441, N491, and N516. A helical membrane pass occupies residues 536-556; sequence FLIYLVSFLGSLSVLPGNIIS. The Cytoplasmic portion of the chain corresponds to 557–565; that stretch reads ALLMDRIGR. The chain crosses the membrane as a helical span at residues 566–586; sequence LKMIGGSMLISAVCCFFLFFG. The Extracellular segment spans residues 587–592; it reads NSESAM. Residues 593–613 form a helical membrane-spanning segment; sequence IGWQCLFCGTSIAAWNALDVI. Over 614-626 the chain is Cytoplasmic; that stretch reads TVELYPTNQRATA. Residues 627–649 traverse the membrane as a helical segment; it reads FGILNGLCKLGAILGNTIFASFV. Residues 650–653 lie on the Extracellular side of the membrane; the sequence is GITK. Residues 654 to 672 form a helical membrane-spanning segment; sequence VVPILLAAASLVGGGLVAL. The Cytoplasmic segment spans residues 673–683; it reads RLPETREQVLM.

It belongs to the major facilitator superfamily. As to quaternary structure, interacts with SYT1 in a calcium-independent manner. Forms a complex with SYT1, syntaxin-1 and SNAP25. In terms of assembly, (Microbial infection) Interacts with C.botulinum neurotoxin type A1 and type A2 (BoNT/A, botA). Interaction is improved by glycosylation of SV2. (Microbial infection) Interacts with C.botulinum neurotoxin type D (BoNT/D, botD). As to quaternary structure, (Microbial infection) Interacts with C.botulinum neurotoxin type E (BoNT/E). Interaction requires glycosylation of SV2 proteins. In terms of assembly, (Microbial infection) Interacts with C.botulinum neurotoxin type F (BoNT/F). Interaction requires glycosylation of SV2 proteins. In terms of processing, N-glycosylated. Post-translationally, the N-terminal cytoplasmic domain is phosphorylated by CK1. Widely expressed throughout the brain. Specifically expressed by pinealocytes in the pineal gland. Also detected in testis (at protein level). Specifically expressed in neural tissues. Expressed in the spinal cord and in all brain regions with a stronger expression in hippocampus and cortex.

Its subcellular location is the cytoplasmic vesicle. The protein resides in the secretory vesicle. It is found in the synaptic vesicle membrane. The protein localises to the acrosome. In terms of biological role, probably plays a role in the control of regulated secretion in neural and endocrine cells. (Microbial infection) Receptor for C.botulinum neurotoxin type A (BoNT/A, botA); the toxin binds via extracellular loop 4. Restores uptake of BoNT/A in mouse and rat cells that are deleted for SV2 receptor. Glycosylation of SV2B is not essential for receptor activity, but enhances the interaction. Also serves as a receptor for the closely related C.botulinum neurotoxin type A2; glycosylation is not essential but enhances the interaction. Functionally, (Microbial infection) Possible receptor for C.botulinum neurotoxin type D (BoNT/D, botD); BoNT/D does not bind to extracellular loop 4 as do BoNT/A and BoNT/E. Another group does not find a convincing interaction with SV2. Its function is as follows. (Microbial infection) Receptor for C.botulinum neurotoxin type E (BoNT/E); the toxin probably binds via extracellular loop 4. Restores uptake of BoNT/E in mouse cells that are deleted for SV2 receptor. Glycosylation of SV2B is not essential for receptor activity, but enhances the interaction. In terms of biological role, (Microbial infection) Receptor for C.botulinum neurotoxin type F (BoNT/F); binding requires glycosylation of this protein. This Rattus norvegicus (Rat) protein is Synaptic vesicle glycoprotein 2B (Sv2b).